Consider the following 71-residue polypeptide: Large ribosomal subunit protein bL31 (71 aa).

Zn(2+) contacts are provided by Cys16, Cys18, Cys38, and Cys41.

It belongs to the bacterial ribosomal protein bL31 family. Type A subfamily. Part of the 50S ribosomal subunit. Zn(2+) serves as cofactor.

In terms of biological role, binds the 23S rRNA. The polypeptide is Large ribosomal subunit protein bL31 (Neisseria meningitidis serogroup A / serotype 4A (strain DSM 15465 / Z2491)).